The following is a 506-amino-acid chain: Xaa-Pro aminopeptidase 3 (506 aa).

The transit peptide at 1 to 31 (MPSLLSTPKLAPVLARLRGLSGCMSCLQRRY) directs the protein to the mitochondrion. The interval 54 to 79 (HPHLLRPGEVTPGLSQVEYALRRHKL) is interaction with TNFRSF1B. Residues tyrosine 300, aspartate 331, aspartate 342, histidine 423, histidine 430, glutamate 450, and glutamate 474 each coordinate substrate. The Mn(2+) site is built by aspartate 331, aspartate 342, and histidine 423. 2 residues coordinate Mn(2+): glutamate 450 and glutamate 474.

The protein belongs to the peptidase M24B family. Homodimer. Interacts with TNFRSF1B/TNFR2 (activated) and TRAF2. Mn(2+) serves as cofactor. As to expression, expressed in brain, kidney, heart, liver, skeletal muscle and testis.

It localises to the mitochondrion. Its subcellular location is the cytoplasm. The enzyme catalyses Release of any N-terminal amino acid, including proline, that is linked to proline, even from a dipeptide or tripeptide.. Its function is as follows. Catalyzes the removal of a penultimate prolyl residue from the N-termini of peptides, such as Leu-Pro-Ala. Also shows low activity towards peptides with Ala or Ser at the P1 position. Promotes TNFRSF1B-mediated phosphorylation of MAPK8/JNK1 and MAPK9/JNK2, suggesting a function as an adapter protein for TNFRSF1B; the effect is independent of XPNPEP3 peptidase activity. May inhibit apoptotic cell death induced via TNF-TNFRSF1B signaling. The sequence is that of Xaa-Pro aminopeptidase 3 (Xpnpep3) from Mus musculus (Mouse).